Consider the following 312-residue polypeptide: Very-long-chain 3-oxoacyl-CoA reductase (312 aa).

Residues 4-24 (ALPAAGFLYWVGAGTVAYLAL) traverse the membrane as a helical segment. 50-79 (GEWAVVTGSTDGIGKSYAEELAKHGMKVVL) contacts NADP(+). Transmembrane regions (helical) follow at residues 182-202 (GAIL…LTIY) and 271-291 (GYLI…WIYL). Ser189 is a substrate binding site. Tyr202 functions as the Proton acceptor in the catalytic mechanism. Positions 308–312 (KTKKN) match the Di-lysine motif motif.

This sequence belongs to the short-chain dehydrogenases/reductases (SDR) family. 17-beta-HSD 3 subfamily. In terms of assembly, interacts with ELOVL1 and LASS2. In terms of tissue distribution, expressed in most tissues tested. Highly expressed in the ovary and mammary. Expressed in platelets.

The protein localises to the endoplasmic reticulum membrane. The catalysed reaction is a very-long-chain (3R)-3-hydroxyacyl-CoA + NADP(+) = a very-long-chain 3-oxoacyl-CoA + NADPH + H(+). It catalyses the reaction 17beta-estradiol + NAD(+) = estrone + NADH + H(+). It carries out the reaction 17beta-estradiol + NADP(+) = estrone + NADPH + H(+). The enzyme catalyses 3-oxooctadecanoyl-CoA + NADPH + H(+) = (3R)-hydroxyoctadecanoyl-CoA + NADP(+). The catalysed reaction is (7Z,10Z,13Z,16Z)-3-oxodocosatetraenoyl-CoA + NADPH + H(+) = (3R)-hydroxy-(7Z,10Z,13Z,16Z)-docosatetraenoyl-CoA + NADP(+). It catalyses the reaction 3-oxo-(7Z,10Z,13Z,16Z,19Z)-docosapentaenoyl-CoA + NADPH + H(+) = (3R)-hydroxy-(7Z,10Z,13Z,16Z,19Z)-docosapentaenoyl-CoA + NADP(+). It carries out the reaction (8Z,11Z,14Z)-3-oxoeicosatrienoyl-CoA + NADPH + H(+) = (3R)-hydroxy-(8Z,11Z,14Z)-eicosatrienoyl-CoA + NADP(+). It participates in lipid metabolism; fatty acid biosynthesis. Its pathway is steroid biosynthesis; estrogen biosynthesis. Functionally, catalyzes the second of the four reactions of the long-chain fatty acids elongation cycle. This endoplasmic reticulum-bound enzymatic process, allows the addition of two carbons to the chain of long- and very long-chain fatty acids/VLCFAs per cycle. This enzyme has a 3-ketoacyl-CoA reductase activity, reducing 3-ketoacyl-CoA to 3-hydroxyacyl-CoA, within each cycle of fatty acid elongation. Thereby, it may participate in the production of VLCFAs of different chain lengths that are involved in multiple biological processes as precursors of membrane lipids and lipid mediators. May also catalyze the transformation of estrone (E1) into estradiol (E2) and play a role in estrogen formation. This chain is Very-long-chain 3-oxoacyl-CoA reductase, found in Homo sapiens (Human).